Here is a 713-residue protein sequence, read N- to C-terminus: Calpastatin (713 aa).

Positions 1–21 (MSRPGPKPAASSRPRRGAAAS) are enriched in low complexity. Residues 1-152 (MSRPGPKPAA…SADGESVAGG (152 aa)) form a disordered region. A compositionally biased stretch (polar residues) spans 47 to 64 (VTASSAATGTSPRMSTTG). Ser57 carries the post-translational modification Phosphoserine. Lys69 participates in a covalent cross-link: Glycyl lysine isopeptide (Lys-Gly) (interchain with G-Cter in SUMO2). Lys86 is modified (N6-acetyllysine). The span at 120–129 (SRSNEQIVSE) shows a compositional bias: polar residues. 2 positions are modified to phosphoserine: Ser122 and Ser171. Thr173 carries the phosphothreonine modification. The Inhibitory domain 1 repeat unit spans residues 208 to 260 (TNKDDPPYTGPVVLDPMDSTYLEALGIKEGTIPPEYRKLLEKNEAITGPLPDS). The tract at residues 253-402 (ITGPLPDSPK…PEETSKCLSE (150 aa)) is disordered. Phosphoserine occurs at positions 260 and 281. 3 stretches are compositionally biased toward polar residues: residues 275-285 (SDFTCSSPTGK), 294-304 (GESSKAQSAGV), and 326-346 (QALQ…QSHL). One copy of the Inhibitory domain 2 repeat lies at 341 to 393 (DPQSHLRQAKQVKEAKAKEERQEKCGEDEDTVPAEYRLKPAKDKDGKPLLPEP). Basic and acidic residues-rich tracts occupy residues 351–365 (QVKE…QEKC) and 376–387 (YRLKPAKDKDGK). Residues Ser401, Ser403, Ser410, and Ser445 each carry the phosphoserine modification. The segment at 442–507 (LARSLGTRKE…PLLPKEAEEQ (66 aa)) is disordered. Residues 448–505 (TRKEDPEDEKSLVDKVKEKAKEEDHEKLGEKEETIPPDYRLEIVKDKDGKPLLPKEAE) show a composition bias toward basic and acidic residues. The stretch at 451–504 (EDPEDEKSLVDKVKEKAKEEDHEKLGEKEETIPPDYRLEIVKDKDGKPLLPKEA) is one Inhibitory domain 3 repeat. 2 positions are modified to phosphoserine: Ser521 and Ser532. The segment covering 544–558 (VSETVSQVPAPSNHT) has biased composition (polar residues). The segment at 544–713 (VSETVSQVPA…PKPKVDEDAT (170 aa)) is disordered. Residues Ser580 and Ser582 each carry the phosphoserine modification. An Inhibitory domain 4 repeat occupies 588-641 (PDPDENKPLDDKVKEKIKAEHSEKLGERDDTIPPEYRHLLDNDGKDKPEKPLTK). 2 stretches are compositionally biased toward basic and acidic residues: residues 588 to 648 (PDPD…KLGQ) and 687 to 713 (SKNE…EDAT).

It belongs to the protease inhibitor I27 (calpastatin) family.

Specific inhibition of calpain (calcium-dependent cysteine protease). Plays a key role in postmortem tenderization of meat and have been proposed to be involved in muscle protein degradation in living tissue. The protein is Calpastatin (Cast) of Rattus norvegicus (Rat).